A 428-amino-acid polypeptide reads, in one-letter code: Serine--tRNA ligase (428 aa).

L-serine is bound at residue 231 to 233 (TSE). ATP is bound by residues 262-264 (RRE) and Val278. Residue Glu285 participates in L-serine binding. An ATP-binding site is contributed by 349–352 (ELTS). Residue Thr384 coordinates L-serine.

Belongs to the class-II aminoacyl-tRNA synthetase family. Type-1 seryl-tRNA synthetase subfamily. As to quaternary structure, homodimer. The tRNA molecule binds across the dimer.

It localises to the cytoplasm. It catalyses the reaction tRNA(Ser) + L-serine + ATP = L-seryl-tRNA(Ser) + AMP + diphosphate + H(+). The enzyme catalyses tRNA(Sec) + L-serine + ATP = L-seryl-tRNA(Sec) + AMP + diphosphate + H(+). It functions in the pathway aminoacyl-tRNA biosynthesis; selenocysteinyl-tRNA(Sec) biosynthesis; L-seryl-tRNA(Sec) from L-serine and tRNA(Sec): step 1/1. Its function is as follows. Catalyzes the attachment of serine to tRNA(Ser). Is also able to aminoacylate tRNA(Sec) with serine, to form the misacylated tRNA L-seryl-tRNA(Sec), which will be further converted into selenocysteinyl-tRNA(Sec). The protein is Serine--tRNA ligase of Bifidobacterium adolescentis (strain ATCC 15703 / DSM 20083 / NCTC 11814 / E194a).